The following is a 313-amino-acid chain: Solute carrier family 35 member E3 (313 aa).

9 helical membrane-spanning segments follow: residues 17–37 (GLLF…WIYV), 40–60 (GFPN…GLYI), 77–97 (LLLL…SLQN), 126–143 (FSTR…GVIL), 153–173 (FLGM…QVWV), 187–206 (LLYY…VPFF), 225–245 (LMVL…YWII), 252–272 (TYNM…YVLF), and 275–295 (PLSI…LAYT).

Belongs to the TPT transporter family. SLC35E subfamily.

The protein resides in the membrane. In terms of biological role, putative transporter. In Homo sapiens (Human), this protein is Solute carrier family 35 member E3 (SLC35E3).